The following is a 970-amino-acid chain: uncharacterized protein (970 aa).

Residues 12 to 32 (VIFFSVFFVIFFLFIESSVGF) traverse the membrane as a helical segment.

It to E.coli YtfN.

It localises to the membrane. This is an uncharacterized protein from Buchnera aphidicola subsp. Acyrthosiphon pisum (strain APS) (Acyrthosiphon pisum symbiotic bacterium).